The following is a 311-amino-acid chain: Ribosomal RNA small subunit methyltransferase H (311 aa).

S-adenosyl-L-methionine contacts are provided by residues 32–34 (AGH), Asp52, Phe79, Asp100, and Gln107.

Belongs to the methyltransferase superfamily. RsmH family.

The protein resides in the cytoplasm. The catalysed reaction is cytidine(1402) in 16S rRNA + S-adenosyl-L-methionine = N(4)-methylcytidine(1402) in 16S rRNA + S-adenosyl-L-homocysteine + H(+). In terms of biological role, specifically methylates the N4 position of cytidine in position 1402 (C1402) of 16S rRNA. The sequence is that of Ribosomal RNA small subunit methyltransferase H from Staphylococcus aureus (strain Mu3 / ATCC 700698).